The following is a 346-amino-acid chain: S-adenosylmethionine:tRNA ribosyltransferase-isomerase (346 aa).

The protein belongs to the QueA family. Monomer.

Its subcellular location is the cytoplasm. It carries out the reaction 7-aminomethyl-7-carbaguanosine(34) in tRNA + S-adenosyl-L-methionine = epoxyqueuosine(34) in tRNA + adenine + L-methionine + 2 H(+). Its pathway is tRNA modification; tRNA-queuosine biosynthesis. In terms of biological role, transfers and isomerizes the ribose moiety from AdoMet to the 7-aminomethyl group of 7-deazaguanine (preQ1-tRNA) to give epoxyqueuosine (oQ-tRNA). In Shewanella frigidimarina (strain NCIMB 400), this protein is S-adenosylmethionine:tRNA ribosyltransferase-isomerase.